Here is a 508-residue protein sequence, read N- to C-terminus: Catalase (508 aa).

A signal peptide spans Met-1 to Ala-21. Residues His-72 and Asn-145 contribute to the active site. Residue Tyr-353 participates in heme binding. Polar residues predominate over residues Pro-373–Leu-392. The tract at residues Pro-373–Asp-396 is disordered.

Belongs to the catalase family. The cofactor is heme.

It localises to the periplasm. It carries out the reaction 2 H2O2 = O2 + 2 H2O. In terms of biological role, decomposes hydrogen peroxide into water and oxygen; serves to protect cells from the toxic effects of hydrogen peroxide. This chain is Catalase, found in Vibrio vulnificus (strain YJ016).